We begin with the raw amino-acid sequence, 199 residues long: Probable GTP-binding protein EngB (199 aa).

The 175-residue stretch at 22–196 (NFSEVAFLGR…EDVIINQTLG (175 aa)) folds into the EngB-type G domain. GTP-binding positions include 30–37 (GRSNVGKS), 57–61 (GKTQL), 82–85 (DLPG), 152–155 (TKCD), and 175–177 (VSN). Mg(2+) contacts are provided by S37 and T59.

The protein belongs to the TRAFAC class TrmE-Era-EngA-EngB-Septin-like GTPase superfamily. EngB GTPase family. Mg(2+) serves as cofactor.

In terms of biological role, necessary for normal cell division and for the maintenance of normal septation. The sequence is that of Probable GTP-binding protein EngB from Campylobacter jejuni subsp. doylei (strain ATCC BAA-1458 / RM4099 / 269.97).